The primary structure comprises 226 residues: Gap junction beta-2 protein (226 aa).

Residues 1–20 (MDWGGLHTILGGVNKHSTSI) lie on the Cytoplasmic side of the membrane. Residues 21–40 (GKIWLTVLFIFRIMILVVAA) form a helical membrane-spanning segment. Topologically, residues 41–75 (KEVWGDEQADFVCNTLQPGCKNVCYDHYFPISHIR) are extracellular. Cystine bridges form between Cys-53–Cys-180, Cys-60–Cys-174, and Cys-64–Cys-169. A helical transmembrane segment spans residues 76-98 (LWALQLIFVSTPALLVAMHVAYY). Residues 99 to 131 (RHEKKRKFIRGEIKTEFKDIEEIKKQKVRIEGS) are Cytoplasmic-facing. Residues 132–154 (LWWTYTGSIFFRVIFEAAFMYVF) traverse the membrane as a helical segment. Over 155-192 (YVMYDGFAMQRLVKCNAWPCPNTVDCFVSRPTEKTVFT) the chain is Extracellular. Residues 193 to 215 (VFMIAVSGICILLNVTELCYLLI) form a helical membrane-spanning segment. Residues 216-226 (RFCSGKSKKPV) are Cytoplasmic-facing.

It belongs to the connexin family. A connexon is composed of a hexamer of connexins. Interacts with CNST.

It localises to the cell membrane. The protein resides in the cell junction. It is found in the gap junction. One gap junction consists of a cluster of closely packed pairs of transmembrane channels, the connexons, through which materials of low MW diffuse from one cell to a neighboring cell. The polypeptide is Gap junction beta-2 protein (GJB2) (Bos taurus (Bovine)).